Here is a 739-residue protein sequence, read N- to C-terminus: Exocyst complex component 3-like protein (739 aa).

Disordered stretches follow at residues Met-1–Pro-21 and Ala-698–Leu-718. The tract at residues Met-1–Thr-370 is mediates interaction with EXOC2, EXOC4 and EXOC5.

It belongs to the SEC6 family. As to quaternary structure, interacts with EXOC2, EXOC4 and EXOC5; may be part of the exocyst. As to expression, ubiquitously expressed.

It is found in the cytoplasmic vesicle. Its subcellular location is the secretory vesicle. Functionally, as part of the exocyst, may play a role in regulated exocytosis of insulin granules. In Mus musculus (Mouse), this protein is Exocyst complex component 3-like protein (Exoc3l1).